We begin with the raw amino-acid sequence, 798 residues long: Nuclear cap-binding protein subunit 1 (798 aa).

The MIF4G domain occupies 28-241; sequence EKKLQGVIGK…SLSAQIEALR (214 aa). The segment at 663-686 is disordered; that stretch reads NKIKEEDDEESDIKMDEDETKEEK. Over residues 668–682 the composition is skewed to acidic residues; the sequence is EDDEESDIKMDEDET.

The protein belongs to the NCBP1 family. In terms of assembly, component of the nuclear cap-binding complex (CBC), a heterodimer composed of ncbp-1 and ncbp-1 that interacts with m7GpppG-capped RNA.

It is found in the nucleus. Its function is as follows. Component of the cap-binding complex (CBC), which binds cotranscriptionally to the 5'-cap of pre-mRNAs and is involved in various processes such as pre-mRNA splicing and RNA-mediated gene silencing (RNAi). The CBC complex is involved in miRNA-mediated RNA interference and is required for primary microRNAs (miRNAs) processing. In the CBC complex, ncbp-1 does not bind directly capped RNAs (m7GpppG-capped RNA) but is required to stabilize the movement of the N-terminal loop of ncbp-2 and lock the CBC into a high affinity cap-binding state with the cap structure. The protein is Nuclear cap-binding protein subunit 1 (ncbp-1) of Caenorhabditis elegans.